Reading from the N-terminus, the 176-residue chain is Mitochondrial inner membrane protein Mpv17 (176 aa).

4 helical membrane passes run 18–38, 53–73, 94–114, and 131–151; these read VQVL…QQLV, TMVS…YKVL, GGFA…LNGL, and LITN…LVPL.

It belongs to the peroxisomal membrane protein PXMP2/4 family. In terms of tissue distribution, ubiquitous. Expressed in pancreas, kidney, muscle, liver, lung, placenta, brain and heart.

The protein localises to the mitochondrion inner membrane. In terms of biological role, non-selective channel that modulates the membrane potential under normal conditions and oxidative stress, and is involved in mitochondrial homeostasis. Involved in mitochondrial deoxynucleoside triphosphates (dNTP) pool homeostasis and mitochondrial DNA (mtDNA) maintenance. May be involved in the regulation of reactive oxygen species metabolism and the control of oxidative phosphorylation. In Homo sapiens (Human), this protein is Mitochondrial inner membrane protein Mpv17.